The primary structure comprises 396 residues: Elongation factor Tu (396 aa).

One can recognise a tr-type G domain in the interval 10–205 (KPHVNIGTIG…ACDDNIPDPV (196 aa)). Residues 19–26 (GHVDHGKT) form a G1 region. 19 to 26 (GHVDHGKT) contributes to the GTP binding site. Threonine 26 contributes to the Mg(2+) binding site. A G2 region spans residues 62 to 66 (GITIN). Positions 83-86 (DAPG) are G3. Residues 83 to 87 (DAPGH) and 138 to 141 (NKCD) contribute to the GTP site. The G4 stretch occupies residues 138–141 (NKCD). The tract at residues 175–177 (SAL) is G5.

This sequence belongs to the TRAFAC class translation factor GTPase superfamily. Classic translation factor GTPase family. EF-Tu/EF-1A subfamily. In terms of assembly, monomer.

It localises to the cytoplasm. It carries out the reaction GTP + H2O = GDP + phosphate + H(+). Its function is as follows. GTP hydrolase that promotes the GTP-dependent binding of aminoacyl-tRNA to the A-site of ribosomes during protein biosynthesis. The chain is Elongation factor Tu from Corynebacterium efficiens (strain DSM 44549 / YS-314 / AJ 12310 / JCM 11189 / NBRC 100395).